The primary structure comprises 552 residues: HTH-type transcriptional regulator SgrR (552 aa).

The 116-residue stretch at 1 to 116 folds into the HTH marR-type domain; it reads MPSARLQQQF…LVSHLGRSFR (116 aa). The segment at residues 26 to 49 is a DNA-binding region (H-T-H motif); sequence LNELAALLSCSRRHMRTLLNTMQD. The segment at 163-492 is solute-binding; sequence ELEADIAHHW…IDWQADAARW (330 aa).

Its function is as follows. Activates the small RNA gene sgrS under glucose-phosphate stress conditions as well as yfdZ. Represses its own transcription under both stress and non-stress conditions. Might act as a sensor of the intracellular accumulation of phosphoglucose by binding these molecules in its C-terminal solute-binding domain. This Shigella dysenteriae serotype 1 (strain Sd197) protein is HTH-type transcriptional regulator SgrR.